Reading from the N-terminus, the 91-residue chain is UPF0358 protein SERP0701 (91 aa).

The protein belongs to the UPF0358 family.

This chain is UPF0358 protein SERP0701, found in Staphylococcus epidermidis (strain ATCC 35984 / DSM 28319 / BCRC 17069 / CCUG 31568 / BM 3577 / RP62A).